The following is a 272-amino-acid chain: Plastid division protein PDV1 (272 aa).

The Cytoplasmic segment spans residues 1-206 (MGEMEIEEIE…KRALGFNHVK (206 aa)). Residues 40–61 (KPSNRSEKRKNPHGNSGEDKRP) are disordered. Residues 78-102 (IQEAKSLNAIRTALENLEDQLEFFH) adopt a coiled-coil conformation. A helical transmembrane segment spans residues 207-225 (GVLGNAAIFAISVVAMLHL). The Chloroplast intermembrane segment spans residues 226–272 (HQVATSEHHLQKKEDRFYRSQQRKTYGRDKSSADRSLDHLDVMMARG).

In terms of assembly, interacts (via C-terminus) with CDP1/PARC6 (via C-terminus). Interacts with ARC5/DRP5B. Expressed in young developing leaves, root tips, shoot apices, and flower buds (sepals, petals, stamens, and pistils), but not in developed tissues.

Its subcellular location is the plastid. The protein resides in the chloroplast outer membrane. Component of the plastid division machinery. Required to mediate the dissociation of ARC5/DRP5B from plastid outer envelope membranes (OEMs) at the midplastid constriction site in the cytoplasm, thus triggering ARC5/DRP5B ring turnover at the chloroplast division site. Binding to phosphatidylinositol 4-phosphate (PI4P) modulates negatively chloroplast division. This Arabidopsis thaliana (Mouse-ear cress) protein is Plastid division protein PDV1.